Here is a 1138-residue protein sequence, read N- to C-terminus: MVWRVPPFLLPILFLASHVGAAVDLTLLANLRLTDPQRFFLTCVSGEAGAGRGSDAWGPPLLLEKDDRIVRTPPGPPLRLARNGSHQVTLRGFSKPSDLVGVFSCVGGAGARRTRVIYVHNSPGAHLLPDKVTHTVNKGDTAVLSARVHKEKQTDVIWKSNGSYFYTLDWHEAQDGRFLLQLPNVQPPSSGIYSATYLEASPLGSAFFRLIVRGCGAGRWGPGCTKECPGCLHGGVCHDHDGECVCPPGFTGTRCEQACREGRFGQSCQEQCPGISGCRGLTFCLPDPYGCSCGSGWRGSQCQEACAPGHFGADCRLQCQCQNGGTCDRFSGCVCPSGWHGVHCEKSDRIPQILNMASELEFNLETMPRINCAAAGNPFPVRGSIELRKPDGTVLLSTKAIVEPEKTTAEFEVPRLVLADSGFWECRVSTSGGQDSRRFKVNVKVPPVPLAAPRLLTKQSRQLVVSPLVSFSGDGPISTVRLHYRPQDSTMDWSTIVVDPSENVTLMNLRPKTGYSVRVQLSRPGEGGEGAWGPPTLMTTDCPEPLLQPWLEGWHVEGTDRLRVSWSLPLVPGPLVGDGFLLRLWDGTRGQERRENVSSPQARTALLTGLTPGTHYQLDVQLYHCTLLGPASPPAHVLLPPSGPPAPRHLHAQALSDSEIQLTWKHPEALPGPISKYVVEVQVAGGAGDPLWIDVDRPEETSTIIRGLNASTRYLFRMRASIQGLGDWSNTVEESTLGNGLQAEGPVQESRAAEEGLDQQLILAVVGSVSATCLTILAALLTLVCIRRSCLHRRRTFTYQSGSGEETILQFSSGTLTLTRRPKLQPEPLSYPVLEWEDITFEDLIGEGNFGQVIRAMIKKDGLKMNAAIKMLKEYASENDHRDFAGELEVLCKLGHHPNIINLLGACKNRGYLYIAIEYAPYGNLLDFLRKSRVLETDPAFAREHGTASTLSSRQLLRFASDAANGMQYLSEKQFIHRDLAARNVLVGENLASKIADFGLSRGEEVYVKKTMGRLPVRWMAIESLNYSVYTTKSDVWSFGVLLWEIVSLGGTPYCGMTCAELYEKLPQGYRMEQPRNCDDEVYELMRQCWRDRPYERPPFAQIALQLGRMLEARKAYVNMSLFENFTYAGIDATAEEA.

The N-terminal stretch at 1–21 is a signal peptide; that stretch reads MVWRVPPFLLPILFLASHVGA. Residues 22–759 lie on the Extracellular side of the membrane; sequence AVDLTLLANL…SRAAEEGLDQ (738 aa). The 63-residue stretch at 43–105 folds into the Ig-like C2-type 1 domain; it reads CVSGEAGAGR…PSDLVGVFSC (63 aa). Asparagine 83 and asparagine 161 each carry an N-linked (GlcNAc...) asparagine glycan. EGF-like domains lie at 214–256, 258–303, and 305–345; these read GCGA…TRCE, ACRE…SQCQ, and ACAP…VHCE. Intrachain disulfides connect cysteine 228–cysteine 237, cysteine 231–cysteine 244, and cysteine 246–cysteine 255. 3 cysteine pairs are disulfide-bonded: cysteine 315/cysteine 327, cysteine 321/cysteine 333, and cysteine 335/cysteine 344. In terms of domain architecture, Ig-like C2-type 2 spans 372 to 426; it reads CAAAGNPFPVRGSIELRKPDGTVLLSTKAIVEPEKTTAEFEVPRLVLADSGFWEC. Fibronectin type-III domains lie at 446–545, 548–642, and 646–739; these read PPVP…CPEP, QPWL…LPPS, and APRH…TLGN. N-linked (GlcNAc...) asparagine glycans are attached at residues asparagine 503, asparagine 596, and asparagine 709. Residues 760-784 traverse the membrane as a helical segment; the sequence is QLILAVVGSVSATCLTILAALLTLV. Over 785 to 1138 the chain is Cytoplasmic; that stretch reads CIRRSCLHRR…AGIDATAEEA (354 aa). The Protein kinase domain maps to 839-1118; the sequence is ITFEDLIGEG…RMLEARKAYV (280 aa). Residues 845-853 and lysine 870 each bind ATP; that span reads IGEGNFGQV. Catalysis depends on aspartate 979, which acts as the Proton acceptor. The residue at position 1007 (tyrosine 1007) is a Phosphotyrosine; by autocatalysis.

It belongs to the protein kinase superfamily. Tyr protein kinase family. Tie subfamily. In terms of assembly, heterodimer with TEK/TIE2. Interacts with SVEP1 (via C-terminus). Phosphorylated on tyrosine residues in response to ANGPT1, most likely by TEK/TIE2. Specifically expressed in developing vascular endothelial cells.

The protein resides in the cell membrane. It carries out the reaction L-tyrosyl-[protein] + ATP = O-phospho-L-tyrosyl-[protein] + ADP + H(+). In terms of biological role, transmembrane tyrosine-protein kinase that may modulate TEK/TIE2 activity and contribute to the regulation of angiogenesis. In Homo sapiens (Human), this protein is Tyrosine-protein kinase receptor Tie-1 (TIE1).